Here is a 299-residue protein sequence, read N- to C-terminus: Protein phosphatase 1 regulatory subunit 3D (299 aa).

The disordered stretch occupies residues 1–22 (MSRGPSSAVLPSALGSRKLGPR). Phosphoserine is present on residues S23, S25, and S28. The segment at 37 to 94 (EPRACRPPGSPGRAPPPTPAPSGCDPRLRPIILRRARSLPSSPERRQKAAGAPGAACR) is disordered. A compositionally biased stretch (pro residues) spans 44–56 (PGSPGRAPPPTPA). Residues 57 to 67 (PSGCDPRLRPI) show a composition bias toward low complexity. The residue at position 74 (S74) is a Phosphoserine. Low complexity predominate over residues 85 to 94 (AAGAPGAACR). The PP1-binding motif motif lies at 101–104 (LRVR). S133 is subject to Phosphoserine. The CBM21 domain maps to 169 to 278 (GERLQRQLVC…NNDHRDYSLT (110 aa)).

In terms of assembly, interacts with PPP1CC catalytic subunit of PP1, and associates with glycogen. Interacts with EPM2A; in the presence of NHLC1/malin the interaction leads to PPP1R3D ubiquitination and autophagic degradation. Expressed in all tissues tested. High expression in skeletal muscle and heart.

In terms of biological role, seems to act as a glycogen-targeting subunit for PP1. PP1 is essential for cell division, and participates in the regulation of glycogen metabolism, muscle contractility and protein synthesis. The sequence is that of Protein phosphatase 1 regulatory subunit 3D (PPP1R3D) from Homo sapiens (Human).